The chain runs to 140 residues: Virion protein 5 (140 aa).

It localises to the virion. This Enterococcus faecalis (Streptococcus faecalis) protein is Virion protein 5.